The primary structure comprises 598 residues: NADH-quinone oxidoreductase subunit C/D (598 aa).

The tract at residues 1-189 is NADH dehydrogenase I subunit C; it reads MTDLTTSDST…DPFVLTKQKE (189 aa). The segment at 213–598 is NADH dehydrogenase I subunit D; that stretch reads DFMFLNLGPN…IDFVMSDVDR (386 aa).

In the N-terminal section; belongs to the complex I 30 kDa subunit family. It in the C-terminal section; belongs to the complex I 49 kDa subunit family. NDH-1 is composed of 13 different subunits. Subunits NuoB, CD, E, F, and G constitute the peripheral sector of the complex.

It localises to the cell inner membrane. The enzyme catalyses a quinone + NADH + 5 H(+)(in) = a quinol + NAD(+) + 4 H(+)(out). NDH-1 shuttles electrons from NADH, via FMN and iron-sulfur (Fe-S) centers, to quinones in the respiratory chain. The immediate electron acceptor for the enzyme in this species is believed to be ubiquinone. Couples the redox reaction to proton translocation (for every two electrons transferred, four hydrogen ions are translocated across the cytoplasmic membrane), and thus conserves the redox energy in a proton gradient. The polypeptide is NADH-quinone oxidoreductase subunit C/D (Yersinia enterocolitica serotype O:8 / biotype 1B (strain NCTC 13174 / 8081)).